The chain runs to 160 residues: MLRTMLTAKIHRATVTQADLHYVGSVTIDADLLAAADLLPGEQVTIVDINNGARLETYAIAGPAGSGIIGINGAAARLVQPGDLVIIIAYGLMDDAEARRHVPKVLFVDAANRIIGHGDDPAEPLPGDPSSLRGDIPVDIPVDIPVPTAAAAVRSAMATQ.

S25 (schiff-base intermediate with substrate; via pyruvic acid) is an active-site residue. S25 is modified (pyruvic acid (Ser)). Residue T57 participates in substrate binding. Y58 acts as the Proton donor in catalysis. 73-75 (GAA) lines the substrate pocket.

The protein belongs to the PanD family. Heterooctamer of four alpha and four beta subunits. It depends on pyruvate as a cofactor. In terms of processing, is synthesized initially as an inactive proenzyme, which is activated by self-cleavage at a specific serine bond to produce a beta-subunit with a hydroxyl group at its C-terminus and an alpha-subunit with a pyruvoyl group at its N-terminus.

It localises to the cytoplasm. The enzyme catalyses L-aspartate + H(+) = beta-alanine + CO2. Its pathway is cofactor biosynthesis; (R)-pantothenate biosynthesis; beta-alanine from L-aspartate: step 1/1. Functionally, catalyzes the pyruvoyl-dependent decarboxylation of aspartate to produce beta-alanine. In Frankia casuarinae (strain DSM 45818 / CECT 9043 / HFP020203 / CcI3), this protein is Aspartate 1-decarboxylase 2.